A 167-amino-acid polypeptide reads, in one-letter code: Small ribosomal subunit protein uS5 (167 aa).

The region spanning 12 to 75 (LQEKLIAVNR…EKARRNMVTV (64 aa)) is the S5 DRBM domain.

It belongs to the universal ribosomal protein uS5 family. As to quaternary structure, part of the 30S ribosomal subunit. Contacts proteins S4 and S8.

With S4 and S12 plays an important role in translational accuracy. Functionally, located at the back of the 30S subunit body where it stabilizes the conformation of the head with respect to the body. The sequence is that of Small ribosomal subunit protein uS5 from Shewanella oneidensis (strain ATCC 700550 / JCM 31522 / CIP 106686 / LMG 19005 / NCIMB 14063 / MR-1).